The primary structure comprises 1203 residues: Chromosome partition protein Smc (1203 aa).

32-39 (PNGSGKSN) is a binding site for ATP. Coiled-coil stretches lie at residues 167-203 (ILKYRRRKEKALRKLDAMSANLARLTDLTTELRRQLK), 250-288 (MMRRDHDEAAARLAVASEELAAHEAALTELSGRAESVQQ), and 327-497 (DVLE…LERK). In terms of domain architecture, SMC hinge spans 511 to 622 (GLLGSIAKLV…VVNYLAEALG (112 aa)). Coiled coils occupy residues 657–689 (EVTSEIDKAGAELAAAEAHMAQLNAALSGALSE), 720–765 (RLGQ…NVEQ), and 976–1030 (YDRA…RKDL).

It belongs to the SMC family. In terms of assembly, homodimer.

It localises to the cytoplasm. In terms of biological role, required for chromosome condensation and partitioning. The sequence is that of Chromosome partition protein Smc from Mycobacterium leprae (strain TN).